Reading from the N-terminus, the 881-residue chain is Phosphoenolpyruvate carboxylase (881 aa).

Active-site residues include His-139 and Lys-544.

It belongs to the PEPCase type 1 family. It depends on Mg(2+) as a cofactor.

It catalyses the reaction oxaloacetate + phosphate = phosphoenolpyruvate + hydrogencarbonate. In terms of biological role, forms oxaloacetate, a four-carbon dicarboxylic acid source for the tricarboxylic acid cycle. The protein is Phosphoenolpyruvate carboxylase of Marinobacter nauticus (strain ATCC 700491 / DSM 11845 / VT8) (Marinobacter aquaeolei).